The chain runs to 251 residues: Malonyl-[acyl-carrier protein] O-methyltransferase (251 aa).

Belongs to the methyltransferase superfamily.

It carries out the reaction malonyl-[ACP] + S-adenosyl-L-methionine = malonyl-[ACP] methyl ester + S-adenosyl-L-homocysteine. It participates in cofactor biosynthesis; biotin biosynthesis. Its function is as follows. Converts the free carboxyl group of a malonyl-thioester to its methyl ester by transfer of a methyl group from S-adenosyl-L-methionine (SAM). It allows to synthesize pimeloyl-ACP via the fatty acid synthetic pathway. The sequence is that of Malonyl-[acyl-carrier protein] O-methyltransferase from Erwinia billingiae (strain Eb661).